A 343-amino-acid polypeptide reads, in one-letter code: CMP-N-acetylneuraminate-beta-galactosamide-alpha-2,3-sialyltransferase 1 (343 aa).

At 1-11 the chain is on the cytoplasmic side; it reads MAPMRKKSTLK. Residues 12–27 traverse the membrane as a helical; Signal-anchor for type II membrane protein segment; that stretch reads LLTLLVLFIFLTSFFL. N28 carries an N-linked (GlcNAc...) asparagine glycan. The Lumenal segment spans residues 28–343; that stretch reads NYSHTVVTTA…INKIRIFKGR (316 aa). 3 cysteine pairs are disulfide-bonded: C62/C67, C64/C142, and C145/C284. N82 is a glycosylation site (N-linked (GlcNAc...) asparagine). Q108 serves as a coordination point for substrate. N-linked (GlcNAc...) asparagine glycosylation occurs at N117. Residues N150, N173, Y233, Y269, G273, G293, H302, and H319 each coordinate substrate. N-linked (GlcNAc...) asparagine glycosylation occurs at N326.

Belongs to the glycosyltransferase 29 family. Post-translationally, the soluble form derives from the membrane form by proteolytic processing. As to expression, the long isoform is abundant in salivary gland, liver, lung, and colon mucosa. Both long and short forms are detected in submaxillary salivary glands.

The protein localises to the golgi apparatus. Its subcellular location is the golgi stack membrane. The protein resides in the trans-Golgi network membrane. It localises to the secreted. It carries out the reaction a beta-D-galactosyl-(1-&gt;3)-N-acetyl-alpha-D-galactosaminyl derivative + CMP-N-acetyl-beta-neuraminate = an N-acetyl-alpha-neuraminyl-(2-&gt;3)-beta-D-galactosyl-(1-&gt;3)-N-acetyl-alpha-D-galactosaminyl derivative + CMP + H(+). The catalysed reaction is a ganglioside GM1 (d18:1(4E)) + CMP-N-acetyl-beta-neuraminate = a ganglioside GD1a (d18:1(4E)) + CMP + H(+). It catalyses the reaction ganglioside GM1 (d18:1(4E)/18:0) + CMP-N-acetyl-beta-neuraminate = ganglioside GD1a (18:1(4E)/18:0) + CMP + H(+). The enzyme catalyses a ganglioside GA1 (d18:1(4E)) + CMP-N-acetyl-beta-neuraminate = a ganglioside GM1b (d18:1(4E)) + CMP + H(+). It carries out the reaction a ganglioside GD1b + CMP-N-acetyl-beta-neuraminate = a ganglioside GT1b + CMP + H(+). The catalysed reaction is a 3-O-[beta-D-galactosyl-(1-&gt;3)-N-acetyl-alpha-D-galactosaminyl]-L-threonyl-[protein] + CMP-N-acetyl-beta-neuraminate = a 3-O-[N-acetyl-alpha-neuraminyl-(2-&gt;3)-beta-D-galactosyl-(1-&gt;3)-N-acetyl-alpha-D-galactosaminyl]-L-threonyl-[protein] + CMP + H(+). It catalyses the reaction a 3-O-[beta-D-galactosyl-(1-&gt;3)-N-acetyl-alpha-D-galactosaminyl]-L-seryl-[protein] + CMP-N-acetyl-beta-neuraminate = 3-O-[N-acetyl-alpha-neuraminyl-(2-&gt;3)-beta-D-galactosyl-(1-&gt;3)-N-acetyl-alpha-D-galactosaminyl]-L-seryl-[protein] + CMP + H(+). Its pathway is protein modification; protein glycosylation. It participates in glycolipid biosynthesis. Functionally, a beta-galactoside alpha2-&gt;3 sialyltransferase involved in terminal sialylation of glycoproteins and glycolipids. Catalyzes the transfer of sialic acid (N-acetyl-neuraminic acid; Neu5Ac) from the nucleotide sugar donor CMP-Neu5Ac onto acceptor Galbeta-(1-&gt;3)-GalNAc-terminated glycoconjugates through an alpha2-3 linkage. Adds sialic acid to the core 1 O-glycan, Galbeta-(1-&gt;3)-GalNAc-O-Ser/Thr, which is a major structure of mucin-type O-glycans. As part of a homeostatic mechanism that regulates CD8-positive T cell numbers, sialylates core 1 O-glycans of T cell glycoproteins, SPN/CD43 and PTPRC/CD45. Prevents premature apoptosis of thymic CD8-positive T cells prior to peripheral emigration, whereas in the secondary lymphoid organs controls the survival of CD8-positive memory T cells generated following a successful immune response. Transfers sialic acid to asialofetuin, presumably onto Galbeta-(1-&gt;3)-GalNAc-O-Ser. Sialylates GM1a, GA1 and GD1b gangliosides to form GD1a, GM1b and GT1b, respectively. In Sus scrofa (Pig), this protein is CMP-N-acetylneuraminate-beta-galactosamide-alpha-2,3-sialyltransferase 1 (ST3GAL1).